Consider the following 180-residue polypeptide: Large ribosomal subunit protein uL5 (180 aa).

It belongs to the universal ribosomal protein uL5 family. As to quaternary structure, part of the 50S ribosomal subunit; part of the 5S rRNA/L5/L18/L25 subcomplex. Contacts the 5S rRNA and the P site tRNA. Forms a bridge to the 30S subunit in the 70S ribosome.

This is one of the proteins that bind and probably mediate the attachment of the 5S RNA into the large ribosomal subunit, where it forms part of the central protuberance. In the 70S ribosome it contacts protein S13 of the 30S subunit (bridge B1b), connecting the 2 subunits; this bridge is implicated in subunit movement. Contacts the P site tRNA; the 5S rRNA and some of its associated proteins might help stabilize positioning of ribosome-bound tRNAs. The protein is Large ribosomal subunit protein uL5 of Clostridium botulinum (strain ATCC 19397 / Type A).